We begin with the raw amino-acid sequence, 118 residues long: MQWYLSVLKNYVGFSGRARRKEYWMFTLINAIVGAIINVIQLILGLELPYLSMLYLLATFLPVLALAIRRLHDTDRSGAWALLFFVPFIGWLVLLVFFCTEGTSGSNRYGNDPKFGSN.

Topologically, residues 1 to 25 are periplasmic; the sequence is MQWYLSVLKNYVGFSGRARRKEYWM. A helical transmembrane segment spans residues 26-46; sequence FTLINAIVGAIINVIQLILGL. Glu-47 is a topological domain (cytoplasmic). A helical membrane pass occupies residues 48 to 68; the sequence is LPYLSMLYLLATFLPVLALAI. Residues 69-77 lie on the Periplasmic side of the membrane; sequence RRLHDTDRS. The chain crosses the membrane as a helical span at residues 78 to 98; it reads GAWALLFFVPFIGWLVLLVFF. The Cytoplasmic segment spans residues 99-118; that stretch reads CTEGTSGSNRYGNDPKFGSN.

It to E.coli YhaH.

It is found in the cell inner membrane. The chain is Inner membrane protein YhaI (yhaI) from Escherichia coli O157:H7.